Reading from the N-terminus, the 2599-residue chain is Protein DOP1 homolog (2599 aa).

Disordered stretches follow at residues 532 to 571 and 595 to 701; these read EQSG…SDSR and ASNQ…LDEE. Polar residues-rich tracts occupy residues 534-549, 595-604, and 625-636; these read SGGS…NSAS, ASNQSVGRQS, and ASDTGQQSSSDL. Phosphoserine is present on S753. Positions 1240-1251 are enriched in basic and acidic residues; that stretch reads PRIEIPHKETPL. Disordered stretches follow at residues 1240–1316 and 1347–1368; these read PRIE…SSSA and TYRL…EQKD. The segment covering 1264–1282 has biased composition (polar residues); that stretch reads QPSQEQPANQPDNSLQYDQ. A compositionally biased stretch (basic and acidic residues) spans 1297–1309; sequence SELRETSIEKEDS. The residue at position 1355 (T1355) is a Phosphothreonine. S1360, S1363, and S1371 each carry phosphoserine. A disordered region spans residues 1409-1442; that stretch reads CISKTSTDSNISGSHVEQPEQEEETEPGTESTIN. The segment covering 1410 to 1423 has biased composition (polar residues); the sequence is ISKTSTDSNISGSH. S2525 carries the phosphoserine modification.

It belongs to the DOP1 family.

The protein localises to the golgi apparatus membrane. In terms of biological role, may be involved in protein traffic between late Golgi and early endosomes. This Drosophila melanogaster (Fruit fly) protein is Protein DOP1 homolog.